Consider the following 581-residue polypeptide: Interleukin-22 receptor subunit alpha-1 (581 aa).

The N-terminal stretch at 1–15 (MKTLLTILTVGSLAA) is a signal peptide. At 16–230 (HTTVDTSGLL…TLPDRTWAYS (215 aa)) the chain is on the extracellular side. Fibronectin type-III domains follow at residues 18–115 (TVDT…RFSS) and 141–221 (PTLT…RVKT). Residues Cys71 and Cys79 are joined by a disulfide bond. Residues Asn80 and Asn172 are each glycosylated (N-linked (GlcNAc...) asparagine). Cys128 and Cys217 form a disulfide bridge. The helical transmembrane segment at 231-251 (FSGAVLFSMGFLVGLLCYLGY) threads the bilayer. At 252 to 581 (KYITKPPVPP…GLALTVQWES (330 aa)) the chain is on the cytoplasmic side. The disordered stretch occupies residues 343–364 (QQTLSPPSYAPKAVPEVQPPSY). Phosphoserine; by GSK3-beta occurs at positions 410 and 414. Lys449 is covalently cross-linked (Glycyl lysine isopeptide (Lys-Gly) (interchain with G-Cter in ubiquitin)).

It belongs to the type II cytokine receptor family. As to quaternary structure, heterodimer with IL10RB and with IL20RB. Post-translationally, phosphorylated by GSK3-BETA and MAPK; phosphorylation by GSK3-BETA stabilizes IL22RA1 by preventing its proteasomal degradation. As to expression, expressed in kidney, liver and lung.

The protein resides in the cell membrane. Functionally, component of the receptor for IL20, IL22 and IL24. Component of IL22 receptor formed by IL22RA1 and IL10RB enabling IL22 signaling via JAK/STAT pathways. IL22 also induces activation of MAPK1/MAPK3 and Akt kinases pathways. Component of one of the receptor for IL20 and IL24 formed by IL22RA1 and IL20RB also signaling through STATs activation. Mediates IL24 antiangiogenic activity as well as IL24 inhibitory effect on endothelial cell tube formation and differentiation. The chain is Interleukin-22 receptor subunit alpha-1 (Il22ra1) from Mus musculus (Mouse).